A 431-amino-acid chain; its full sequence is Interleukin-11 receptor subunit alpha (431 aa).

The signal sequence occupies residues 1–23 (MSSSRSGLTRVLVAVATALVSSS). Over 24 to 371 (TPCPQAWGPP…DPLEQVAVLA (348 aa)) the chain is Extracellular. Residues 27 to 110 (PQAWGPPGVQ…FGGMVTLKLG (84 aa)) form the Ig-like C2-type domain. Cystine bridges form between Cys48/Cys94, Cys120/Cys130, and Cys170/Cys180. Fibronectin type-III domains follow at residues 112-219 (PPAR…LRPD) and 220-317 (PPQG…TPST). A glycan (N-linked (GlcNAc...) asparagine) is linked at Asn127. Residues 151-170 (KTLPGAESQRESPSTGPWPC) form a disordered region. Residue Asn194 is glycosylated (N-linked (GlcNAc...) asparagine). The WSXWS motif motif lies at 304–308 (WSAWS). The segment at 310-360 (EAWGTPSTGPLRDEVPDGSRGHEQKLEAAAQEDSPAPPSPSLQPDPRPLDH) is disordered. The span at 320 to 335 (LRDEVPDGSRGHEQKL) shows a compositional bias: basic and acidic residues. Over residues 344 to 355 (PAPPSPSLQPDP) the composition is skewed to pro residues. A helical membrane pass occupies residues 372–392 (SLGIFSFLGLAVGALALGLWL). Topologically, residues 393–431 (RLRRSGKDGPQKPGFLAPMIPGDKLPGIPNLQRTPENFS) are cytoplasmic. A disordered region spans residues 402-431 (PQKPGFLAPMIPGDKLPGIPNLQRTPENFS).

This sequence belongs to the type I cytokine receptor family. Type 3 subfamily. On IL11 binding, forms a multimer complex with IL6ST/gp130. Post-translationally, a short soluble form is also released from the membrane by proteolysis. The sIL11RA is formed either by limited proteolysis of membrane-bound receptors, a process referred to as ectodomain shedding, or directly secreted from the cells after alternative mRNA splicing. mIL11RA is cleaved by the proteases ADAM10, ELANE and PRTN3.

The protein resides in the membrane. Its subcellular location is the secreted. Its function is as follows. Receptor for interleukin-11 (IL11). The receptor systems for IL6, LIF, OSM, CNTF, IL11 and CT1 can utilize IL6ST for initiating signal transmission. The IL11/IL11RA/IL6ST complex may be involved in the control of proliferation and/or differentiation of skeletogenic progenitor or other mesenchymal cells. Essential for the normal development of craniofacial bones and teeth. Restricts suture fusion and tooth number. In terms of biological role, soluble form of IL11 receptor (sIL11RA) that acts as an agonist of IL11 activity. The IL11:sIL11RA complex binds to IL6ST/gp130 on cell surfaces and induces signaling also on cells that do not express membrane-bound IL11RA in a process called IL11 trans-signaling. The polypeptide is Interleukin-11 receptor subunit alpha (Rattus norvegicus (Rat)).